The primary structure comprises 108 residues: Small ribosomal subunit protein bS16 (108 aa).

The segment at Glu-82–Asn-108 is disordered. A compositionally biased stretch (basic residues) spans Pro-96–Asn-108.

It belongs to the bacterial ribosomal protein bS16 family.

In Mycoplasma capricolum subsp. capricolum (strain California kid / ATCC 27343 / NCTC 10154), this protein is Small ribosomal subunit protein bS16.